Reading from the N-terminus, the 307-residue chain is tRNA dimethylallyltransferase (307 aa).

ATP is bound at residue 6-13; it reads GATATGKT. 8–13 is a substrate binding site; sequence TATGKT. The segment at 31–34 is interaction with substrate tRNA; that stretch reads DSMM.

The protein belongs to the IPP transferase family. In terms of assembly, monomer. Requires Mg(2+) as cofactor.

The catalysed reaction is adenosine(37) in tRNA + dimethylallyl diphosphate = N(6)-dimethylallyladenosine(37) in tRNA + diphosphate. Catalyzes the transfer of a dimethylallyl group onto the adenine at position 37 in tRNAs that read codons beginning with uridine, leading to the formation of N6-(dimethylallyl)adenosine (i(6)A). The chain is tRNA dimethylallyltransferase from Sulfurihydrogenibium sp. (strain YO3AOP1).